A 333-amino-acid polypeptide reads, in one-letter code: Homeobox protein Hox-A1 (333 aa).

Residues 61–82 (ITSPHHHHHHHHHPQPATYQTS) form a disordered region. A compositionally biased stretch (basic residues) spans 64 to 74 (PHHHHHHHHHP). The interaction with OGT stretch occupies residues 74 to 202 (PQPATYQTSG…PASETSSPAQ (129 aa)). O-linked (GlcNAc) threonine glycosylation is present at threonine 152. Residues 203–208 (TFDWMK) carry the Antp-type hexapeptide motif. The homeobox DNA-binding region spans 227–286 (QPNAVRTNFTTKQLTELEKEFHFNKYLTRARSEIAASLQLNETQVKIWFQNRRMKQKKRE). The segment at 279–333 (RMKQKKREKEGLLPMSPATPPGSDEKTEESSEKSSSSPSAPSPASSTSDTLTTSH) is disordered. Positions 301 to 310 (SDEKTEESSE) are enriched in basic and acidic residues. Residues 311 to 333 (KSSSSPSAPSPASSTSDTLTTSH) are compositionally biased toward low complexity.

Belongs to the Antp homeobox family. Labial subfamily. As to quaternary structure, interacts with OGT (via TPR repeats domain); the interaction takes place mainly in the nucleus. Forms a DNA-binding heterodimer with transcription factor PBX1. Post-translationally, glycosylated by OGT.

It is found in the nucleus. In terms of biological role, sequence-specific transcription factor. Regulates multiple developmental processes including brainstem, inner and outer ear, abducens nerve and cardiovascular development and morphogenesis as well as cognition and behavior. Also part of a developmental regulatory system that provides cells with specific positional identities on the anterior-posterior axis. Acts on the anterior body structures. Seems to act in the maintenance and/or generation of hindbrain segments. Activates transcription in the presence of PBX1A and PKNOX1. In Rattus norvegicus (Rat), this protein is Homeobox protein Hox-A1 (Hoxa1).